A 451-amino-acid polypeptide reads, in one-letter code: Golgi reassembly-stacking protein 2 (451 aa).

G2 is lipidated: N-myristoyl glycine. PDZ GRASP-type domains are found at residues 15–105 (EGYH…FCSF) and 111–199 (NVWH…YGYL). The tract at residues 15–215 (EGYHVLRVQE…PFEEGKKISL (201 aa)) is GRASP. A dimethylated arginine mark is found at R30 and R47. The tract at residues 194 to 199 (IGYGYL) is important for membrane binding. The residue at position 214 (S214) is a Phosphoserine. At T222 the chain carries Phosphothreonine. The residue at position 225 (T225) is a Phosphothreonine; by MAPK. Low complexity predominate over residues 236–252 (LSSVSPPSLSPPGTTGV). Disordered stretches follow at residues 236–255 (LSSV…VEQS) and 377–451 (EGSS…SEPS). Residues 410–424 (SSLTVDVTSPASKVP) are compositionally biased toward polar residues. S411 bears the Phosphoserine mark. T417 and T435 each carry phosphothreonine. A phosphoserine mark is found at S443 and S448.

It belongs to the GORASP family. As to quaternary structure, homodimer. Homooligomer. ER stress induces phosphorylation-dependent monomerization. Interacts with BLZF1/Golgin 45. Identified in a complex with RAB2 and GORASP2. Interacts with JAM2 and JAM3. Interacts with members of the p24 cargo receptors. Interacts with CNIH and the cytoplasmic domain of transmembrane TGFA, prior its transit in the trans-Golgi. Interacts with KCTD5. Interacts with TMED2 and TMED3. Interacts with SEC16A in response to ER stress. Interacts (via PDZ GRASP-type 1 domain) with core-glycosylated CFTR in response to ER stress. Post-translationally, myristoylated. Myristoylation is essential for the Golgi targeting. In terms of processing, palmitoylated. Phosphorylated in mitotic cells. ER stress-induced phosphorylation at Ser-443 induces monomerization and subsequent relocalization from Golgi to ER which is essential for mediating unconventional (ER/Golgi-independent) trafficking of CFTR to the cell membrane. Detected in lung, heart and testis. Colocalized in a polarized fashion in the acrosome region with JAM3 in round spermatids (at protein level).

The protein localises to the golgi apparatus membrane. It is found in the endoplasmic reticulum membrane. The protein resides in the golgi apparatus. In terms of biological role, key structural protein of the Golgi apparatus. The membrane cisternae of the Golgi apparatus adhere to each other to form stacks, which are aligned side by side to form the Golgi ribbon. Acting in concert with GORASP1/GRASP65, is required for the formation and maintenance of the Golgi ribbon, and may be dispensable for the formation of stacks. However, other studies suggest that GORASP2 plays a role in assembly and membrane stacking of the Golgi cisternae, and in the process by which Golgi stacks reform after breakdown during mitosis and meiosis. May regulate the intracellular transport and presentation of a defined set of transmembrane proteins, such as transmembrane TGFA. Required for normal acrosome formation during spermiogenesis and normal male fertility, probably by promoting colocalization of JAM2 and JAM3 at contact sites between germ cells and Sertoli cells. Mediates ER stress-induced unconventional (ER/Golgi-independent) trafficking of core-glycosylated CFTR to cell membrane. This is Golgi reassembly-stacking protein 2 (Gorasp2) from Mus musculus (Mouse).